We begin with the raw amino-acid sequence, 335 residues long: Nucleoid-associated protein CKO_00588 (335 aa).

The protein belongs to the YejK family.

The protein resides in the cytoplasm. The protein localises to the nucleoid. The chain is Nucleoid-associated protein CKO_00588 from Citrobacter koseri (strain ATCC BAA-895 / CDC 4225-83 / SGSC4696).